A 235-amino-acid chain; its full sequence is Small ribosomal subunit protein uS3 (235 aa).

A KH type-2 domain is found at 39–107 (VRKFLNKELA…PAQINIAEVK (69 aa)). A disordered region spans residues 215–235 (AQSEQQPADKPKKAPRGKGRK).

It belongs to the universal ribosomal protein uS3 family. As to quaternary structure, part of the 30S ribosomal subunit. Forms a tight complex with proteins S10 and S14.

Binds the lower part of the 30S subunit head. Binds mRNA in the 70S ribosome, positioning it for translation. This Haemophilus influenzae (strain ATCC 51907 / DSM 11121 / KW20 / Rd) protein is Small ribosomal subunit protein uS3.